The primary structure comprises 369 residues: Superinfection exclusion protein (369 aa).

Positions 1–15 (MIALLILSLTCSVST) are cleaved as a signal peptide.

The protein belongs to the serpin family. Orthopoxvirus OPG040 subfamily. Interacts with A56 protein.

It localises to the virion membrane. The protein resides in the host cell membrane. In terms of biological role, prevents cell to cell fusion via its interaction with A56 protein. The A56-K2 complex associates with components of the entry fusion complex (EFC) presumably to avoid superinfection and syncytium formation. The chain is Superinfection exclusion protein (OPG040) from Vaccinia virus (strain Copenhagen) (VACV).